The primary structure comprises 99 residues: Large ribosomal subunit protein bL21 (99 aa).

The protein belongs to the bacterial ribosomal protein bL21 family. As to quaternary structure, part of the 50S ribosomal subunit. Contacts protein L20.

Its function is as follows. This protein binds to 23S rRNA in the presence of protein L20. This Neorickettsia sennetsu (strain ATCC VR-367 / Miyayama) (Ehrlichia sennetsu) protein is Large ribosomal subunit protein bL21.